The following is a 360-amino-acid chain: Isopentenyl-diphosphate delta-isomerase (360 aa).

Substrate is bound at residue 12-13; it reads RK. FMN-binding positions include Ser70, 71 to 73, Ser101, and Asn130; that span reads SMT. Substrate is bound at residue 101 to 103; that stretch reads SMR. Gln165 serves as a coordination point for substrate. Residue Glu166 participates in Mg(2+) binding. FMN contacts are provided by residues Lys197, 288–290, and 309–310; these read GIR and AG.

Belongs to the IPP isomerase type 2 family. Homooctamer. Dimer of tetramers. It depends on FMN as a cofactor. Requires NADPH as cofactor. Mg(2+) is required as a cofactor.

The protein resides in the cytoplasm. It catalyses the reaction isopentenyl diphosphate = dimethylallyl diphosphate. Functionally, involved in the biosynthesis of isoprenoids. Catalyzes the 1,3-allylic rearrangement of the homoallylic substrate isopentenyl (IPP) to its allylic isomer, dimethylallyl diphosphate (DMAPP). The polypeptide is Isopentenyl-diphosphate delta-isomerase (Chlorobium limicola (strain DSM 245 / NBRC 103803 / 6330)).